The primary structure comprises 129 residues: Small ribosomal subunit protein uS11 (129 aa).

The protein belongs to the universal ribosomal protein uS11 family. Part of the 30S ribosomal subunit. Interacts with proteins S7 and S18. Binds to IF-3.

Functionally, located on the platform of the 30S subunit, it bridges several disparate RNA helices of the 16S rRNA. Forms part of the Shine-Dalgarno cleft in the 70S ribosome. This is Small ribosomal subunit protein uS11 from Glaesserella parasuis serovar 5 (strain SH0165) (Haemophilus parasuis).